The chain runs to 113 residues: Putative single-stranded DNA-binding protein ycf41 (113 aa).

An SSB domain is found at 1 to 101 (MNYASFIIKI…EVSGFKIYPF (101 aa)).

The protein localises to the plastid. Its subcellular location is the chloroplast. This chain is Putative single-stranded DNA-binding protein ycf41 (ycf41), found in Trieres chinensis (Marine centric diatom).